The following is a 122-amino-acid chain: Acidic phospholipase A2 BpirPLA2-I (122 aa).

7 disulfides stabilise this stretch: Cys-26/Cys-115, Cys-28/Cys-44, Cys-43/Cys-95, Cys-49/Cys-122, Cys-50/Cys-88, Cys-57/Cys-81, and Cys-75/Cys-86. The Ca(2+) site is built by Tyr-27, Gly-29, and Gly-31. His-47 is a catalytic residue. Position 48 (Asp-48) interacts with Ca(2+). Asp-89 is an active-site residue. The short motif at 105 to 117 (IKYWFYGAKNCQE) is the Antiplatelet activity element.

It belongs to the phospholipase A2 family. Group II subfamily. D49 sub-subfamily. Requires Ca(2+) as cofactor. In terms of tissue distribution, expressed by the venom gland.

The protein localises to the secreted. The enzyme catalyses a 1,2-diacyl-sn-glycero-3-phosphocholine + H2O = a 1-acyl-sn-glycero-3-phosphocholine + a fatty acid + H(+). Inhibited by EDTA and p-bromophenacyl bromide (BPB). Functionally, snake venom phospholipase A2 (PLA2) that inhibits collagen/ADP-induced platelet aggregation, and induces hypotension in rats (activity abolished in the presence of p-bromophenacyl bromide). PLA2 catalyzes the calcium-dependent hydrolysis of the 2-acyl groups in 3-sn-phosphoglycerides. This chain is Acidic phospholipase A2 BpirPLA2-I, found in Bothrops pirajai (Piraja's lancehead).